Here is a 199-residue protein sequence, read N- to C-terminus: Small ribosomal subunit protein eS1 (199 aa).

Belongs to the eukaryotic ribosomal protein eS1 family.

This Pyrococcus horikoshii (strain ATCC 700860 / DSM 12428 / JCM 9974 / NBRC 100139 / OT-3) protein is Small ribosomal subunit protein eS1.